The primary structure comprises 91 residues: YcgL domain-containing protein ESA_01460 (91 aa).

Residues 1 to 85 (MFCVIYRSAR…PPENLLKQHL (85 aa)) enclose the YcgL domain.

This Cronobacter sakazakii (strain ATCC BAA-894) (Enterobacter sakazakii) protein is YcgL domain-containing protein ESA_01460.